The sequence spans 379 residues: Glutamate 5-kinase (379 aa).

Lysine 20 contributes to the ATP binding site. Substrate-binding residues include serine 59, aspartate 146, and asparagine 158. ATP is bound at residue serine 220–lysine 226. The PUA domain occupies threonine 285–asparagine 362.

This sequence belongs to the glutamate 5-kinase family.

Its subcellular location is the cytoplasm. The enzyme catalyses L-glutamate + ATP = L-glutamyl 5-phosphate + ADP. Its pathway is amino-acid biosynthesis; L-proline biosynthesis; L-glutamate 5-semialdehyde from L-glutamate: step 1/2. In terms of biological role, catalyzes the transfer of a phosphate group to glutamate to form L-glutamate 5-phosphate. In Oleidesulfovibrio alaskensis (strain ATCC BAA-1058 / DSM 17464 / G20) (Desulfovibrio alaskensis), this protein is Glutamate 5-kinase.